Consider the following 164-residue polypeptide: Phosphopantetheine adenylyltransferase (164 aa).

Residue Ser10 coordinates substrate. ATP-binding positions include 10 to 11 and His18; that span reads SF. Residues Lys42, Leu74, and Arg88 each contribute to the substrate site. Residues 89 to 91, Glu99, and 124 to 130 each bind ATP; these read GLR and YSFLSSS.

It belongs to the bacterial CoaD family. Homohexamer. Requires Mg(2+) as cofactor.

It localises to the cytoplasm. The catalysed reaction is (R)-4'-phosphopantetheine + ATP + H(+) = 3'-dephospho-CoA + diphosphate. Its pathway is cofactor biosynthesis; coenzyme A biosynthesis; CoA from (R)-pantothenate: step 4/5. Functionally, reversibly transfers an adenylyl group from ATP to 4'-phosphopantetheine, yielding dephospho-CoA (dPCoA) and pyrophosphate. The polypeptide is Phosphopantetheine adenylyltransferase (Exiguobacterium sp. (strain ATCC BAA-1283 / AT1b)).